Here is a 670-residue protein sequence, read N- to C-terminus: Receptor for retinol uptake stra6 (670 aa).

The Extracellular segment spans residues Met-1–Gly-38. A helical transmembrane segment spans residues Leu-39–Ala-59. The Cytoplasmic portion of the chain corresponds to Arg-60–Lys-87. A helical transmembrane segment spans residues Gly-88–His-108. The Extracellular portion of the chain corresponds to His-109–Glu-121. A helical transmembrane segment spans residues Phe-122–Gly-142. Over Thr-143–His-145 the chain is Cytoplasmic. A helical transmembrane segment spans residues Asn-146–Trp-166. Residues Gln-167–Ala-182 lie on the Extracellular side of the membrane. Residues Leu-183 to Leu-203 form a helical membrane-spanning segment. The Cytoplasmic portion of the chain corresponds to Leu-204–Lys-274. The chain crosses the membrane as a helical span at residues Leu-275–Ser-295. Residues Gly-296–Val-346 lie on the Extracellular side of the membrane. The helical transmembrane segment at Ser-347 to His-367 threads the bilayer. Topologically, residues Arg-368–Gly-401 are cytoplasmic. The helical transmembrane segment at Phe-402 to Phe-422 threads the bilayer. Over Ile-423–Trp-452 the chain is Extracellular. A helical transmembrane segment spans residues Pro-453–Phe-473. Topologically, residues Ile-474–Ser-488 are cytoplasmic. The segment at residues Leu-489–Leu-526 is an intramembrane region (helical). Over Asp-527 to Asn-670 the chain is Cytoplasmic. The interval Val-600 to Arg-626 is interaction with calmodulin. Positions Gly-640–Asn-670 are disordered. Residues Thr-645–Glu-664 are compositionally biased toward basic and acidic residues.

As to quaternary structure, homodimer. Interacts (via C-terminus) with calmodulin.

The protein localises to the cell membrane. Its function is as follows. Retinol transporter. Accepts retinol from the extracellular retinol-binding protein rbp4, mediates retinol transport across the cell membrane, and then transmits retinol to the cytoplasmic retinol-binding protein rbp1. Required for normal vitamin A homeostasis. The sequence is that of Receptor for retinol uptake stra6 from Danio rerio (Zebrafish).